A 363-amino-acid polypeptide reads, in one-letter code: Cytoplasmic tRNA 2-thiolation protein 1 (363 aa).

The tract at residues Asp-337–Phe-363 is disordered.

It belongs to the TtcA family. CTU1/NCS6/ATPBD3 subfamily.

Its subcellular location is the cytoplasm. Its pathway is tRNA modification; 5-methoxycarbonylmethyl-2-thiouridine-tRNA biosynthesis. Its function is as follows. Plays a central role in 2-thiolation of mcm(5)S(2)U at tRNA wobble positions of tRNA(Lys), tRNA(Glu) and tRNA(Gln). Directly binds tRNAs and probably acts by catalyzing adenylation of tRNAs, an intermediate required for 2-thiolation. It is unclear whether it acts as a sulfurtransferase that transfers sulfur from thiocarboxylated URM1 onto the uridine of tRNAs at wobble position. In Oryza sativa subsp. japonica (Rice), this protein is Cytoplasmic tRNA 2-thiolation protein 1.